A 66-amino-acid polypeptide reads, in one-letter code: Large ribosomal subunit protein uL29 (66 aa).

This sequence belongs to the universal ribosomal protein uL29 family.

The sequence is that of Large ribosomal subunit protein uL29 from Roseiflexus castenholzii (strain DSM 13941 / HLO8).